Here is a 188-residue protein sequence, read N- to C-terminus: MASTSDIRNGLCIRYNHDIYKITEFLHVKPGKGPAFVRTKLKSVTTGKVLDNTFSAGHKIEEIRVETHKFQFLYEDGEFWHFMNVEDYTQIRLTENALDMPKLIKEGEVVTILINTEDNMPLSVDMPASVVLEVTHTEPGVKGNTATNATKPATVETGFEVNVPLFINEGDKIKIETDKGTYKERIKE.

This sequence belongs to the elongation factor P family.

It is found in the cytoplasm. The protein operates within protein biosynthesis; polypeptide chain elongation. Its function is as follows. Involved in peptide bond synthesis. Stimulates efficient translation and peptide-bond synthesis on native or reconstituted 70S ribosomes in vitro. Probably functions indirectly by altering the affinity of the ribosome for aminoacyl-tRNA, thus increasing their reactivity as acceptors for peptidyl transferase. The polypeptide is Elongation factor P (Christiangramia forsetii (strain DSM 17595 / CGMCC 1.15422 / KT0803) (Gramella forsetii)).